Reading from the N-terminus, the 258-residue chain is Peptidase inhibitor 15 (258 aa).

An N-terminal signal peptide occupies residues 1 to 21 (MTIIAAISCVFLFSILCETSA). The propeptide occupies 22–60 (LVLPNSTDLLLSNNNFTDIETALAAHLDSAKIPKARRKR). 3 N-linked (GlcNAc...) asparagine glycosylation sites follow: Asn26, Asn36, and Asn124. An SCP domain is found at 71-211 (LDYHNQVRGK…RRAVYLVCNY (141 aa)).

The protein belongs to the CRISP family.

Its subcellular location is the secreted. Serine protease inhibitor which displays weak inhibitory activity against trypsin. May play a role in facial patterning during embryonic development. The sequence is that of Peptidase inhibitor 15 (PI15) from Gallus gallus (Chicken).